We begin with the raw amino-acid sequence, 376 residues long: UPF0754 membrane protein Sca_1420 (376 aa).

2 consecutive transmembrane segments (helical) span residues 4–24 (FLVI…TNII) and 356–376 (LLGF…ALFV).

Belongs to the UPF0754 family.

The protein resides in the cell membrane. This Staphylococcus carnosus (strain TM300) protein is UPF0754 membrane protein Sca_1420.